Reading from the N-terminus, the 410-residue chain is Phosphoglycerate kinase (410 aa).

Substrate-binding positions include 22–24, arginine 39, 62–65, arginine 119, and arginine 159; these read DIN and HQSR. ATP is bound by residues glutamate 332 and 358–361; that span reads GGHL.

This sequence belongs to the phosphoglycerate kinase family. As to quaternary structure, homodimer.

It is found in the cytoplasm. The catalysed reaction is (2R)-3-phosphoglycerate + ATP = (2R)-3-phospho-glyceroyl phosphate + ADP. The protein operates within carbohydrate degradation; glycolysis; pyruvate from D-glyceraldehyde 3-phosphate: step 2/5. This is Phosphoglycerate kinase (pgk) from Methanothermus fervidus (strain ATCC 43054 / DSM 2088 / JCM 10308 / V24 S).